We begin with the raw amino-acid sequence, 165 residues long: Phosphopantetheine adenylyltransferase (165 aa).

A substrate-binding site is contributed by Ser-10. ATP-binding positions include 10 to 11 (SF) and His-18. Substrate is bound by residues Lys-42, Thr-79, and Arg-93. Residues 94–96 (GLR), Glu-104, and 129–135 (VRPITAT) each bind ATP.

This sequence belongs to the bacterial CoaD family. In terms of assembly, homohexamer. The cofactor is Mg(2+).

The protein localises to the cytoplasm. The enzyme catalyses (R)-4'-phosphopantetheine + ATP + H(+) = 3'-dephospho-CoA + diphosphate. It participates in cofactor biosynthesis; coenzyme A biosynthesis; CoA from (R)-pantothenate: step 4/5. Its function is as follows. Reversibly transfers an adenylyl group from ATP to 4'-phosphopantetheine, yielding dephospho-CoA (dPCoA) and pyrophosphate. This Rhodopseudomonas palustris (strain BisB5) protein is Phosphopantetheine adenylyltransferase.